We begin with the raw amino-acid sequence, 379 residues long: ATP-sensitive inward rectifier potassium channel 10 (379 aa).

Topologically, residues 1–61 (MTSVAKVYYS…LKDLWTTFID (61 aa)) are cytoplasmic. Arg36 contacts 1,2-dioctanoyl-sn-glycero-3-phospho-(1D-myo-inositol-4,5-bisphosphate). The helical transmembrane segment at 62 to 88 (MQWRYKLLLFSATFAGTWFLFGVVWYL) threads the bilayer. Residues 89 to 114 (VAVAHGDLLELGPPANHTPCVVQVHT) lie on the Extracellular side of the membrane. Residues Cys108 and Cys140 are joined by a disulfide bond. The discontinuously helical; Pore-forming intramembrane region spans 115-131 (LTGAFLFSLESQTTIGY). The Selectivity filter signature appears at 128-133 (TIGYGF). Residues 132–140 (GFRYISEEC) are Extracellular-facing. The helical transmembrane segment at 141–166 (PLAIVLLIAQLVLTTILEIFITGTFL) threads the bilayer. The Cytoplasmic segment spans residues 167–379 (AKIARPKKRA…SALSVRISNV (213 aa)). Residues Lys168, Arg171, and Lys173 each contribute to the 1,2-dioctanoyl-sn-glycero-3-phospho-(1D-myo-inositol-4,5-bisphosphate) site. 210-217 (GCQVTGKL) is an ATP binding site.

The protein belongs to the inward rectifier-type potassium channel (TC 1.A.2.1) family. KCNJ10 subfamily. In terms of assembly, homotetramer. In kidney cells, it forms heteromeric channels with Kir5.1/KCNJ16; this interaction is required for KCNJ16 localization to the basolateral membrane. Interacts with MAGI1, alone and possibly as a heteromer with KCNJ16; this interaction may facilitate KCNJ10/KCNJ16 potassium channel expression at the basolateral membrane in kidney cells. Interacts with PATJ. As to expression, widely expressed in adult brain, including in the neocortex, the stratum pyrimadale of the hippocampus and the piriform cortex. Expressed by cultured astrocytes and also by cocultured cortical neurons (at protein level). In the distal segment of the nephron, expressed in the distal convoluted tubule, the connecting tubule, and the early cortical collecting duct.

It is found in the membrane. It localises to the basolateral cell membrane. It catalyses the reaction K(+)(in) = K(+)(out). Its activity is regulated as follows. Channel activity is strongly regulated by variations of cytosolic pH; channels are activated by alkaline and inhibited by acidic pH values. Activated by phosphatidylinositol 4,5 biphosphate (PtdIns(4,5)P2). Inhibited by Ba(2+) and Cs(+). May be responsible for potassium buffering action of glial cells in the brain. Inward rectifier potassium channels are characterized by a greater tendency to allow potassium to flow into the cell rather than out of it. Their voltage dependence is regulated by the concentration of extracellular potassium; as external potassium is raised, the voltage range of the channel opening shifts to more positive voltages. The inward rectification is mainly due to the blockage of outward current by internal magnesium. Can be blocked by extracellular barium and cesium. In the kidney, together with KCNJ16, mediates basolateral K(+) recycling in distal tubules; this process is critical for Na(+) reabsorption at the tubules. This Mus musculus (Mouse) protein is ATP-sensitive inward rectifier potassium channel 10.